The primary structure comprises 59 residues: Three-finger toxin MS1 (59 aa).

4 cysteine pairs are disulfide-bonded: Cys-3/Cys-22, Cys-17/Cys-39, Cys-41/Cys-52, and Cys-53/Cys-58.

It belongs to the three-finger toxin family. Short-chain subfamily. Type I alpha-neurotoxin sub-subfamily. As to expression, expressed by the venom gland.

The protein localises to the secreted. In terms of biological role, produces peripheral paralysis by blocking neuromuscular transmission at the postsynaptic site. Binds to and inhibits the endogenous nicotinic acetylcholine receptors (nAChR) in human rhabdomyosarcoma TE 671 cell line with an IC(50) of 48.2 mM. This neurotoxin is lethal to mice by intraperitoneal injection and to zebrafish by injection at the back of the dorsolateral region. In Micrurus surinamensis (Surinam coral snake), this protein is Three-finger toxin MS1.